Reading from the N-terminus, the 246-residue chain is 3-deoxy-manno-octulosonate cytidylyltransferase (246 aa).

It belongs to the KdsB family.

The protein localises to the cytoplasm. The enzyme catalyses 3-deoxy-alpha-D-manno-oct-2-ulosonate + CTP = CMP-3-deoxy-beta-D-manno-octulosonate + diphosphate. The protein operates within nucleotide-sugar biosynthesis; CMP-3-deoxy-D-manno-octulosonate biosynthesis; CMP-3-deoxy-D-manno-octulosonate from 3-deoxy-D-manno-octulosonate and CTP: step 1/1. It functions in the pathway bacterial outer membrane biogenesis; lipopolysaccharide biosynthesis. Functionally, activates KDO (a required 8-carbon sugar) for incorporation into bacterial lipopolysaccharide in Gram-negative bacteria. This Leptospira borgpetersenii serovar Hardjo-bovis (strain JB197) protein is 3-deoxy-manno-octulosonate cytidylyltransferase.